The sequence spans 77 residues: U8-lycotoxin-Ls1j (77 aa).

The N-terminal stretch at 1-20 (MKLIIFTGLILFAIVSLIEA) is a signal peptide. Residues 21-26 (QANNEK) constitute a propeptide that is removed on maturation.

Belongs to the neurotoxin 19 (CSTX) family. 08 (U8-Lctx) subfamily. Contains 4 disulfide bonds. Expressed by the venom gland.

It localises to the secreted. The protein is U8-lycotoxin-Ls1j of Lycosa singoriensis (Wolf spider).